A 249-amino-acid polypeptide reads, in one-letter code: Cell surface glycoprotein CD200 receptor 2 (249 aa).

The signal sequence occupies residues 1–24; it reads MHALGRTPALTLLIFIYNFVSVYT. One can recognise an Ig-like V-type domain in the interval 25 to 124; that stretch reads IVSVQMGTKA…GNFHKVYDLQ (100 aa). Residues 25–220 are Extracellular-facing; it reads IVSVQMGTKA…TTSTTPSLLT (196 aa). C38 and C108 are oxidised to a cystine. N-linked (GlcNAc...) asparagine glycosylation is found at N73, N138, and N171. Residues 113–208 form the Ig-like C2-type domain; it reads PEGNFHKVYD…GNQSLSIELS (96 aa). C143 and C192 are oxidised to a cystine. A helical transmembrane segment spans residues 221-241; it reads ILYVKMVLLGIILLKVGFAFF. Over 242–249 the chain is Cytoplasmic; it reads QKRNVTRT.

It belongs to the CD200R family. As to expression, expressed in bone marrow, spleen, brain, lung, testis and thymus.

It localises to the membrane. In terms of biological role, according to PubMed:15187158 it is a receptor for the CD200 cell surface glycoprotein. According to PubMed:16081818 it is not a receptor for the CD200/OX2 cell surface glycoprotein. Involved in the recruitment or surface expression of the TYROBP receptor. This Mus musculus (Mouse) protein is Cell surface glycoprotein CD200 receptor 2 (Cd200r1l).